The following is a 557-amino-acid chain: Aerobic glycerol-3-phosphate dehydrogenase (557 aa).

Residue 21–49 coordinates FAD; that stretch reads DLVIIGGGITGAGIALDASERGMKVALVE.

It belongs to the FAD-dependent glycerol-3-phosphate dehydrogenase family. Requires FAD as cofactor.

The protein localises to the cytoplasm. It catalyses the reaction a quinone + sn-glycerol 3-phosphate = dihydroxyacetone phosphate + a quinol. It functions in the pathway polyol metabolism; glycerol degradation via glycerol kinase pathway; glycerone phosphate from sn-glycerol 3-phosphate (aerobic route): step 1/1. This Staphylococcus aureus (strain MRSA252) protein is Aerobic glycerol-3-phosphate dehydrogenase (glpD).